The chain runs to 352 residues: GTPase Obg (352 aa).

Residues 1-159 (MHFLDQAKIF…MYVWLRLKLL (159 aa)) enclose the Obg domain. The tract at residues 122–142 (DGGRGNASYKTSTNRAPRQHG) is disordered. Positions 160-328 (ADAGLVGLPN…LLDAVLEYLP (169 aa)) constitute an OBG-type G domain. GTP contacts are provided by residues 166–173 (GLPNAGKS), 191–195 (FTTLR), 212–215 (DIPG), 280–283 (NKID), and 309–311 (SGA). Residues Ser173 and Thr193 each contribute to the Mg(2+) site.

It belongs to the TRAFAC class OBG-HflX-like GTPase superfamily. OBG GTPase family. In terms of assembly, monomer. Mg(2+) serves as cofactor.

It localises to the cytoplasm. Functionally, an essential GTPase which binds GTP, GDP and possibly (p)ppGpp with moderate affinity, with high nucleotide exchange rates and a fairly low GTP hydrolysis rate. Plays a role in control of the cell cycle, stress response, ribosome biogenesis and in those bacteria that undergo differentiation, in morphogenesis control. The chain is GTPase Obg from Novosphingobium aromaticivorans (strain ATCC 700278 / DSM 12444 / CCUG 56034 / CIP 105152 / NBRC 16084 / F199).